We begin with the raw amino-acid sequence, 1212 residues long: Metabotropic glutamate receptor 5 (1212 aa).

An N-terminal signal peptide occupies residues 1 to 20 (MVLLLILSVLLLKEDVRGSA). Topologically, residues 22–580 (SSERRVVAHM…QYLRWGDPEP (559 aa)) are extracellular. Cys57 and Cys99 are disulfide-bonded. Tyr64 lines the L-glutamate pocket. A glycan (N-linked (GlcNAc...) asparagine) is linked at Asn88. L-glutamate contacts are provided by residues Ser152 and 173–175 (SAT). N-linked (GlcNAc...) asparagine glycosylation occurs at Asn210. Residue Tyr223 coordinates L-glutamate. Disulfide bonds link Cys241/Cys530, Cys276/Cys278, Cys365/Cys381, Cys419/Cys426, Cys511/Cys531, Cys515/Cys534, Cys537/Cys549, and Cys552/Cys565. Asp305 contacts L-glutamate. Residues Asn378 and Asn382 are each glycosylated (N-linked (GlcNAc...) asparagine). An L-glutamate-binding site is contributed by Lys396. A glycan (N-linked (GlcNAc...) asparagine) is linked at Asn445. A helical transmembrane segment spans residues 581 to 603 (IAAVVFACLGLLATLFVTVVFII). Topologically, residues 604-613 (YRDTPVVKSS) are cytoplasmic. The helical transmembrane segment at 614–636 (SRELCYIILAGICLGYLCTFCLI) threads the bilayer. Over 637 to 644 (AKPKQIYC) the chain is Extracellular. Residues Cys644 and Cys733 are joined by a disulfide bond. Residues 645–667 (YLQRIGIGLSPAMSYSALVTKTN) traverse the membrane as a helical segment. Topologically, residues 668-693 (RIARILAGSKKKICTKKPRFMSACAQ) are cytoplasmic. The chain crosses the membrane as a helical span at residues 694 to 714 (LVIAFILICIQLGIIVALFIM). Residues 715–737 (EPPDIMHDYPSIREVYLICNTTN) lie on the Extracellular side of the membrane. N-linked (GlcNAc...) asparagine glycosylation is present at Asn734. A helical membrane pass occupies residues 738–759 (LGVVTPLGYNGLLILSCTFYAF). At 760-772 (KTRNVPANFNEAK) the chain is on the cytoplasmic side. Residues 773 to 795 (YIAFTMYTTCIIWLAFVPIYFGS) form a helical membrane-spanning segment. Topologically, residues 796 to 798 (NYK) are extracellular. A helical membrane pass occupies residues 799–820 (IITMCFSVSLSATVALGCMFVP). Residues 821-1212 (KVYIILAKPE…RDYTQSSSSL (392 aa)) are Cytoplasmic-facing. Phosphoserine is present on Ser861. Residues Arg869 and Arg925 each carry the omega-N-methylarginine modification. Disordered regions lie at residues 937 to 971 (INKK…GGSA), 1010 to 1056 (FPAP…SQGS), and 1132 to 1191 (GAQA…ALCI). Over residues 961–971 (LGAGAGAGGSA) the composition is skewed to gly residues. Phosphoserine occurs at positions 1018 and 1020. The segment covering 1132–1153 (GAQAAGDAARESPAAGPEAAAA) has biased composition (low complexity). The segment covering 1174–1185 (DSGSTTPNSPVS) has biased composition (polar residues).

It belongs to the G-protein coupled receptor 3 family. As to quaternary structure, the PPXXF motif binds HOMER1, HOMER2 and HOMER3. Interacts with SIAH1, RYR1, RYR2, ITPR1, SHANK1, SHANK3 and TAMALIN. Interacts with NCDN. Isoform 2 interacts with NECAB2. Interacts with CAMK2A.

It is found in the cell membrane. Its function is as follows. G-protein coupled receptor for glutamate. Ligand binding causes a conformation change that triggers signaling via guanine nucleotide-binding proteins (G proteins) and modulates the activity of down-stream effectors. Signaling activates a phosphatidylinositol-calcium second messenger system and generates a calcium-activated chloride current. Plays an important role in the regulation of synaptic plasticity and the modulation of the neural network activity. This chain is Metabotropic glutamate receptor 5 (GRM5), found in Homo sapiens (Human).